The chain runs to 301 residues: D-alanine--D-alanine ligase (301 aa).

The region spanning 99–293 (KRILAFGNVR…FEELLDTIIE (195 aa)) is the ATP-grasp domain. 126-181 (IENLGYPVFIKPNNGGSSVATTLVESKEAVKDAVLEALKYDTEVMIEEYIKGDEIT) is a binding site for ATP. Positions 248, 260, and 262 each coordinate Mg(2+).

It belongs to the D-alanine--D-alanine ligase family. It depends on Mg(2+) as a cofactor. Mn(2+) is required as a cofactor.

The protein resides in the cytoplasm. The enzyme catalyses 2 D-alanine + ATP = D-alanyl-D-alanine + ADP + phosphate + H(+). The protein operates within cell wall biogenesis; peptidoglycan biosynthesis. Its function is as follows. Cell wall formation. This Clostridium perfringens (strain SM101 / Type A) protein is D-alanine--D-alanine ligase.